Reading from the N-terminus, the 856-residue chain is Centrosomal protein of 97 kDa (856 aa).

LRR repeat units follow at residues 37-58 (DVHT…EKCK), 59-80 (QLIQ…AKLT), 81-102 (QLRV…KDLV), 103-124 (HLEW…NSCT), 125-146 (ALQH…SKLI), 147-168 (SLKT…PAYL), 171-192 (NLSI…SFLA), and 196-205 (ELEQLSIMNN). Positions 211-249 (TPSIPGFDYRPFIVSWCLNLRVLDGYVISQKESLKAEWL) constitute an LRRCT domain. The CCP110-binding stretch occupies residues 300 to 742 (HQRQLMSQSQ…KCVKDRDSEA (443 aa)). Residues Ser308 and Ser410 each carry the phosphoserine modification. The interval 430 to 451 (DDGADEFTKGLENQDEDKDKEK) is disordered. Phosphoserine is present on Ser497. The segment covering 498–513 (LTSLPESAGHSASRTE) has biased composition (polar residues). Positions 498–525 (LTSLPESAGHSASRTEANSEEAMSPATS) are disordered. Residue Ser521 is modified to Phosphoserine. Phosphothreonine is present on Thr534. Positions 550 to 579 (LNAAATKLQACWRGFYTRNYNQQAKGVRYE) constitute an IQ domain. The tract at residues 579 to 853 (EIRLRRMQEH…FQGLHVGVTV (275 aa)) is interaction with MPHOSPH9. Disordered stretches follow at residues 646-672 (PPIS…DQSS) and 737-840 (DRDS…PPEC). The segment covering 737 to 752 (DRDSEATAEEHSDCSR) has biased composition (basic and acidic residues). A compositionally biased stretch (polar residues) spans 753 to 773 (ESSASEQDNTLLQQYLTSVQQ). Phosphoserine is present on Ser755. The segment covering 776 to 787 (DAAEAADSDDVA) has biased composition (acidic residues). Residues 799–811 (ERFDASSDSETHR) are compositionally biased toward basic and acidic residues. A compositionally biased stretch (polar residues) spans 812 to 833 (VASTSQDEISQTPENCQLNEEA).

As to quaternary structure, interacts with CALM1, CEP76, KIF24 and TALPID3. Interacts with CCP110. ENKD1 competes with CEP97 for binding to CCP110, destabilizing the interaction between CP110 and CEP97 which promotes the removal of CCP110 and CEP97 from the mother centriole and allows the initiation of ciliogenesis. Via its interaction with CCP110, may indirectly interact with HERC2 and NEURL4. Interacts with MPHOSPH9.

It is found in the cytoplasm. Its subcellular location is the cytoskeleton. It localises to the microtubule organizing center. The protein localises to the centrosome. The protein resides in the centriole. Acts as a key negative regulator of ciliogenesis in collaboration with CCP110 by capping the mother centriole thereby preventing cilia formation. Required for recruitment of CCP110 to the centrosome. This is Centrosomal protein of 97 kDa (Cep97) from Mus musculus (Mouse).